Here is a 170-residue protein sequence, read N- to C-terminus: 6,7-dimethyl-8-ribityllumazine synthase (170 aa).

5-amino-6-(D-ribitylamino)uracil-binding positions include Trp25, 57-59, and 79-81; these read AVE and AVI. A (2S)-2-hydroxy-3-oxobutyl phosphate-binding site is contributed by 84-85; it reads DT. The active-site Proton donor is His87. Asn112 contributes to the 5-amino-6-(D-ribitylamino)uracil binding site. Residue Arg126 coordinates (2S)-2-hydroxy-3-oxobutyl phosphate.

Belongs to the DMRL synthase family.

It catalyses the reaction (2S)-2-hydroxy-3-oxobutyl phosphate + 5-amino-6-(D-ribitylamino)uracil = 6,7-dimethyl-8-(1-D-ribityl)lumazine + phosphate + 2 H2O + H(+). It functions in the pathway cofactor biosynthesis; riboflavin biosynthesis; riboflavin from 2-hydroxy-3-oxobutyl phosphate and 5-amino-6-(D-ribitylamino)uracil: step 1/2. Functionally, catalyzes the formation of 6,7-dimethyl-8-ribityllumazine by condensation of 5-amino-6-(D-ribitylamino)uracil with 3,4-dihydroxy-2-butanone 4-phosphate. This is the penultimate step in the biosynthesis of riboflavin. This is 6,7-dimethyl-8-ribityllumazine synthase from Thermobifida fusca (strain YX).